A 110-amino-acid polypeptide reads, in one-letter code: Ribonuclease P protein component 1 (110 aa).

The protein belongs to the eukaryotic/archaeal RNase P protein component 1 family. Consists of a catalytic RNA component and at least 4-5 protein subunits.

It is found in the cytoplasm. It carries out the reaction Endonucleolytic cleavage of RNA, removing 5'-extranucleotides from tRNA precursor.. Its function is as follows. Part of ribonuclease P, a protein complex that generates mature tRNA molecules by cleaving their 5'-ends. The sequence is that of Ribonuclease P protein component 1 from Methanosarcina mazei (strain ATCC BAA-159 / DSM 3647 / Goe1 / Go1 / JCM 11833 / OCM 88) (Methanosarcina frisia).